We begin with the raw amino-acid sequence, 120 residues long: Glycine cleavage system H protein (120 aa).

The 83-residue stretch at 19–101 folds into the Lipoyl-binding domain; that stretch reads DGTVGITDHA…YEGGWLFKLE (83 aa). Position 60 is an N6-lipoyllysine (Lys60).

It belongs to the GcvH family. As to quaternary structure, the glycine cleavage system is composed of four proteins: P, T, L and H. (R)-lipoate serves as cofactor.

In terms of biological role, the glycine cleavage system catalyzes the degradation of glycine. The H protein shuttles the methylamine group of glycine from the P protein to the T protein. In Deinococcus deserti (strain DSM 17065 / CIP 109153 / LMG 22923 / VCD115), this protein is Glycine cleavage system H protein.